Here is a 689-residue protein sequence, read N- to C-terminus: MTNKPSRYTITSALPYANGPVHIGHLAGVYVPADIYARFLRSKGENVLFIGGSDEHGVPITIRAKKEGVTPQQVVDKYHVQIKQSFEELGISFDIYSRTSSKIHAETSSEYFKKLYEDGKFIEQTSEQYYDPKAEQFLADRYIIGTCPKCGNENAYGDQCEKCGSTLSPSELINPRSTLSGEKPVMKSTKHWFLPLDQYEPWLKQWILEDHKNWKTNVYGQCKSWLDQGLQPRAVTRDLDWGVPVPVAGAEGKVLYVWFDAPIGYISAAKDYFKNSEIKAVHKNNTWEDFWKKDDTKLVHFIGKDNIVFHCIIFPAMLKAEGSYILPDNVPANEFMNLEGDKISTSRNWAVWLHEYLEEFKGKQDVLRYALCANAPETKDNDFTWRDFQARNNNELVAIYGNFVNRALVLTHKYYDSVIPALGKLEASDEGVIMMLKEFPAKIAASIEQYRFREALGFMMDLARLGNKYLADTEPWKIYKENPERVKTILHIGLQIAANLAIVSEPFIPFTSAKLFTMLNLKANTWNNAGTIDLLKAGDQLGTAELLFDKIEDATIEAQVKKLEDTKQANLLANAEVKPLKENVSFDDFAKMDIRVATIIAAEKVAKTKKLLKLTLKTGIDERTVVSGIAEHFEPEAIIGQQVSLLANLAPREIKGIVSQGMILMAEDADGSLKFVQPAAVVNAGSMIG.

Positions 15-25 match the 'HIGH' region motif; the sequence is PYANGPVHIGH. Zn(2+) contacts are provided by cysteine 147, cysteine 150, cysteine 160, and cysteine 163. The short motif at 342–346 is the 'KMSKS' region element; the sequence is KISTS. Residue threonine 345 participates in ATP binding. The 102-residue stretch at 588-689 folds into the tRNA-binding domain; sequence DFAKMDIRVA…AVVNAGSMIG (102 aa).

This sequence belongs to the class-I aminoacyl-tRNA synthetase family. MetG type 1 subfamily. As to quaternary structure, homodimer. The cofactor is Zn(2+).

It is found in the cytoplasm. It catalyses the reaction tRNA(Met) + L-methionine + ATP = L-methionyl-tRNA(Met) + AMP + diphosphate. Functionally, is required not only for elongation of protein synthesis but also for the initiation of all mRNA translation through initiator tRNA(fMet) aminoacylation. The polypeptide is Methionine--tRNA ligase (Cytophaga hutchinsonii (strain ATCC 33406 / DSM 1761 / CIP 103989 / NBRC 15051 / NCIMB 9469 / D465)).